The sequence spans 164 residues: Pyruvoyl-dependent arginine decarboxylase (164 aa).

A Pyruvic acid (Ser) modification is found at Ser-52.

It belongs to the PdaD family. The cofactor is pyruvate.

It carries out the reaction L-arginine + H(+) = agmatine + CO2. The sequence is that of Pyruvoyl-dependent arginine decarboxylase from Methanococcus maripaludis (strain C5 / ATCC BAA-1333).